The chain runs to 70 residues: Small ribosomal subunit protein bS21B (70 aa).

It belongs to the bacterial ribosomal protein bS21 family.

This is Small ribosomal subunit protein bS21B from Burkholderia thailandensis (strain ATCC 700388 / DSM 13276 / CCUG 48851 / CIP 106301 / E264).